A 228-amino-acid chain; its full sequence is ATP-dependent dethiobiotin synthetase BioD (228 aa).

12–17 contacts ATP; the sequence is EIGKTT. Threonine 16 lines the Mg(2+) pocket. Lysine 37 is a catalytic residue. Substrate is bound at residue serine 41. ATP is bound by residues aspartate 54, 116 to 119, and 205 to 207; these read EGAG and PRL. 2 residues coordinate Mg(2+): aspartate 54 and glutamate 116.

Belongs to the dethiobiotin synthetase family. As to quaternary structure, homodimer. Requires Mg(2+) as cofactor.

Its subcellular location is the cytoplasm. The enzyme catalyses (7R,8S)-7,8-diammoniononanoate + CO2 + ATP = (4R,5S)-dethiobiotin + ADP + phosphate + 3 H(+). The protein operates within cofactor biosynthesis; biotin biosynthesis; biotin from 7,8-diaminononanoate: step 1/2. Catalyzes a mechanistically unusual reaction, the ATP-dependent insertion of CO2 between the N7 and N8 nitrogen atoms of 7,8-diaminopelargonic acid (DAPA, also called 7,8-diammoniononanoate) to form a ureido ring. In Pseudomonas aeruginosa (strain ATCC 15692 / DSM 22644 / CIP 104116 / JCM 14847 / LMG 12228 / 1C / PRS 101 / PAO1), this protein is ATP-dependent dethiobiotin synthetase BioD.